A 396-amino-acid chain; its full sequence is 1-deoxy-D-xylulose 5-phosphate reductoisomerase (396 aa).

Positions 10, 11, 12, 13, 36, 37, 38, and 124 each coordinate NADPH. Residue lysine 125 coordinates 1-deoxy-D-xylulose 5-phosphate. Glutamate 126 lines the NADPH pocket. A Mn(2+)-binding site is contributed by aspartate 150. Positions 151, 152, 186, and 209 each coordinate 1-deoxy-D-xylulose 5-phosphate. Glutamate 152 serves as a coordination point for Mn(2+). Glycine 215 is an NADPH binding site. 1-deoxy-D-xylulose 5-phosphate-binding residues include serine 222, asparagine 227, lysine 228, and glutamate 231. Glutamate 231 is a Mn(2+) binding site.

The protein belongs to the DXR family. The cofactor is Mg(2+). Requires Mn(2+) as cofactor.

It carries out the reaction 2-C-methyl-D-erythritol 4-phosphate + NADP(+) = 1-deoxy-D-xylulose 5-phosphate + NADPH + H(+). Its pathway is isoprenoid biosynthesis; isopentenyl diphosphate biosynthesis via DXP pathway; isopentenyl diphosphate from 1-deoxy-D-xylulose 5-phosphate: step 1/6. Its function is as follows. Catalyzes the NADPH-dependent rearrangement and reduction of 1-deoxy-D-xylulose-5-phosphate (DXP) to 2-C-methyl-D-erythritol 4-phosphate (MEP). The protein is 1-deoxy-D-xylulose 5-phosphate reductoisomerase of Glaesserella parasuis serovar 5 (strain SH0165) (Haemophilus parasuis).